We begin with the raw amino-acid sequence, 103 residues long: Histone H4 type VIII (103 aa).

A compositionally biased stretch (gly residues) spans Met1–Gly14. Residues Met1–Arg20 form a disordered region. Ser2 carries the post-translational modification N-acetylserine. Ser2 bears the Phosphoserine mark. Asymmetric dimethylarginine; by PRMT1; alternate is present on Arg4. Arg4 is subject to Citrulline; alternate. Position 4 is an omega-N-methylarginine; by PRMT1; alternate (Arg4). Arg4 carries the symmetric dimethylarginine; by PRMT5 and PRMT7; alternate modification. An N6-(2-hydroxyisobutyryl)lysine; alternate mark is found at Lys6, Lys9, Lys13, and Lys17. Lys6 bears the N6-acetyl-N6-methyllysine; alternate mark. N6-acetyllysine is present on residues Lys6, Lys9, Lys13, and Lys17. Lys6, Lys9, Lys13, and Lys17 each carry N6-butyryllysine; alternate. N6-glutaryllysine; alternate is present on Lys6. N6-lactoyllysine; alternate occurs at positions 6, 9, 13, and 17. At Lys9 the chain carries N6-propionyllysine; alternate. Lys13 bears the N6-acetyl-N6-methyllysine; alternate mark. At Lys13 the chain carries N6-glutaryllysine; alternate. The residue at position 13 (Lys13) is an N6-methyllysine; alternate. Lys17 is modified (N6-propionyllysine; alternate). The residue at position 21 (Lys21) is an N6-methyllysine; alternate. N6,N6,N6-trimethyllysine; alternate is present on Lys21. Position 21 is an N6,N6-dimethyllysine; alternate (Lys21). Residues Lys32 and Lys45 each carry the N6-(2-hydroxyisobutyryl)lysine; alternate modification. Lys32 carries the post-translational modification N6-acetyllysine. An N6-butyryllysine; alternate mark is found at Lys32 and Lys45. At Lys32 the chain carries N6-glutaryllysine; alternate. Lys32 is subject to N6-lactoyllysine; alternate. An N6-propionyllysine; alternate mark is found at Lys32 and Lys45. The residue at position 32 (Lys32) is an N6-succinyllysine; alternate. Residue Lys32 forms a Glycyl lysine isopeptide (Lys-Gly) (interchain with G-Cter in UFM1); alternate linkage. Ser48 bears the Phosphoserine mark. At Tyr52 the chain carries Phosphotyrosine. Lys60 is modified (N6-acetyllysine). Residues Lys60, Lys78, and Lys80 each carry the N6-glutaryllysine; alternate modification. Lys60 is modified (N6-(2-hydroxyisobutyryl)lysine). N6-(2-hydroxyisobutyryl)lysine; alternate occurs at positions 78 and 80. Lys78 and Lys80 each carry N6-butyryllysine; alternate. Lys78 carries the N6-lactoyllysine; alternate modification. Lys78 and Lys80 each carry N6-propionyllysine; alternate. Lys78 carries the N6-succinyllysine modification. Lys80 carries the post-translational modification N6-acetyllysine. A Phosphotyrosine modification is found at Tyr89. Residue Lys92 is modified to N6-(2-hydroxyisobutyryl)lysine; alternate. Lys92 carries the post-translational modification N6-butyryllysine; alternate. Lys92 bears the N6-glutaryllysine; alternate mark. The residue at position 92 (Lys92) is an N6-lactoyllysine; alternate. Lys92 carries the post-translational modification N6-propionyllysine; alternate. Lys92 bears the N6-succinyllysine; alternate mark. Lys92 carries the N6-acetyllysine; alternate modification. Residue Lys92 forms a Glycyl lysine isopeptide (Lys-Gly) (interchain with G-Cter in ubiquitin); alternate linkage.

It belongs to the histone H4 family. The nucleosome is a histone octamer containing two molecules each of H2A, H2B, H3 and H4 assembled in one H3-H4 heterotetramer and two H2A-H2B heterodimers. The octamer wraps approximately 147 bp of DNA. In terms of processing, acetylation at Lys-6 (H4K5ac), Lys-9 (H4K8ac), Lys-13 (H4K12ac) and Lys-17 (H4K16ac) occurs in coding regions of the genome but not in heterochromatin. Citrullination at Arg-4 (H4R3ci) by PADI4 impairs methylation. Post-translationally, monomethylation and asymmetric dimethylation at Arg-4 (H4R3me1 and H4R3me2a, respectively) by PRMT1 favors acetylation at Lys-9 (H4K8ac) and Lys-13 (H4K12ac). Demethylation is performed by JMJD6. Symmetric dimethylation on Arg-4 (H4R3me2s) by the PRDM1/PRMT5 complex may play a crucial role in the germ-cell lineage. In terms of processing, monomethylated, dimethylated or trimethylated at Lys-21 (H4K20me1, H4K20me2, H4K20me3). Monomethylation is performed by KMT5A/SET8. Trimethylation is performed by KMT5B and KMT5C and induces gene silencing. Monomethylated at Lys-13 (H4K12me1) by N6AMT1; H4K12me1 modification is present at the promoters of numerous genes encoding cell cycle regulators. Acetyl-methylated at Lys-6 and Lys-13 (H4K5acme and H4K12acme, respectively), acetyl-methylation is an epigenetic mark of active chromatin associated with increased transcriptional initiation. Acetyl-methylation is formed by acetylation by EP300/p300 of lysine residues that are already monomethylated on the same side chain. H4K5acme and H4K12acme marks specifically bind BRD2. Post-translationally, ubiquitinated by the CUL4-DDB-RBX1 complex in response to ultraviolet irradiation. This may weaken the interaction between histones and DNA and facilitate DNA accessibility to repair proteins. Monoubiquitinated at Lys-92 of histone H4 (H4K91ub1) in response to DNA damage. The exact role of H4K91ub1 in DNA damage response is still unclear but it may function as a licensing signal for additional histone H4 post-translational modifications such as H4 Lys-21 methylation (H4K20me). In terms of processing, sumoylated, which is associated with transcriptional repression. Butyrylation of histones marks active promoters and competes with histone acetylation. Post-translationally, glutarylation at Lys-92 (H4K91glu) destabilizes nucleosomes by promoting dissociation of the H2A-H2B dimers from nucleosomes. In terms of processing, ufmylated; monofmylated by UFL1 at Lys-32 (H4K31Ufm1) in response to DNA damage. Lactylated in macrophages by EP300/P300 by using lactoyl-CoA directly derived from endogenous or exogenous lactate, leading to stimulates gene transcription. Delactylated by SIRT3 at Lys-17 (H4K16la).

Its subcellular location is the nucleus. It localises to the chromosome. Functionally, core component of nucleosome. Nucleosomes wrap and compact DNA into chromatin, limiting DNA accessibility to the cellular machineries which require DNA as a template. Histones thereby play a central role in transcription regulation, DNA repair, DNA replication and chromosomal stability. DNA accessibility is regulated via a complex set of post-translational modifications of histones, also called histone code, and nucleosome remodeling. The sequence is that of Histone H4 type VIII (H4-VIII) from Gallus gallus (Chicken).